Consider the following 451-residue polypeptide: Medium-chain fatty acid ethyl ester synthase/esterase 2 (451 aa).

Lysine 114 is covalently cross-linked (Glycyl lysine isopeptide (Lys-Gly) (interchain with G-Cter in ubiquitin)). The AB hydrolase-1 domain occupies 166–430; it reads PLVVILHGLA…GGHLAYLDKD (265 aa). Catalysis depends on charge relay system residues serine 247, aspartate 395, and histidine 423.

It belongs to the AB hydrolase superfamily. AB hydrolase 4 family.

It carries out the reaction an aliphatic alcohol + acetyl-CoA = an acetyl ester + CoA. Functionally, displays enzymatic activity both for medium-chain fatty acid (MCFA) ethyl ester synthesis and hydrolysis (esterase activity). MCFA are toxic for yeast and this enzyme could thus be involved in their detoxification by esterification. This Saccharomyces cerevisiae (strain ATCC 204508 / S288c) (Baker's yeast) protein is Medium-chain fatty acid ethyl ester synthase/esterase 2 (EHT1).